Reading from the N-terminus, the 260-residue chain is LIM and SH3 domain protein 1 (260 aa).

M1 carries the N-acetylmethionine modification. One can recognise an LIM zinc-binding domain in the interval 5–56 (CARCCKIVYPTEKVNCLDKFWHKACFHCETCKMTLNMKNYKGYEKKPYCNAH). K42 carries the post-translational modification N6-acetyllysine. Nebulin repeat units lie at residues 61 to 95 (SFTMVADTPENLRLKQQSELQSQVRYKEEFEKNKG) and 97 to 131 (GFSVVADTPELQRIKKTQDQISNIKYHEEFEKSRM). At T68 the chain carries Phosphothreonine. K75 bears the N6-methyllysine mark. S99 carries the phosphoserine modification. T104 bears the Phosphothreonine mark. An N6-succinyllysine modification is found at K112. Residues S118 and S134 each carry the phosphoserine modification. The interval 123 to 204 (HEEFEKSRMG…QRSAPGGGGK (82 aa)) is disordered. Over residues 140–155 (ECERRDPQESSYRRPQ) the composition is skewed to basic and acidic residues. Over residues 171–180 (QQPQQQPAAQ) the composition is skewed to low complexity. Positions 201–260 (GGGKRYRAVYDYSAADEDEVSFQDGDTIVNVQQIDDGWMYGTVERTGDTGMLPANYVEAI) constitute an SH3 domain.

As to quaternary structure, interacts with F-actin. Interacts with ANKRD54. Interacts with KBTBD10. Post-translationally, phosphorylated.

The protein localises to the cytoplasm. Its subcellular location is the cell cortex. It localises to the cytoskeleton. Plays an important role in the regulation of dynamic actin-based, cytoskeletal activities. Agonist-dependent changes in LASP1 phosphorylation may also serve to regulate actin-associated ion transport activities, not only in the parietal cell but also in certain other F-actin-rich secretory epithelial cell types. This Bos taurus (Bovine) protein is LIM and SH3 domain protein 1 (LASP1).